Consider the following 140-residue polypeptide: Small ribosomal subunit protein bS6 (140 aa).

The tract at residues 111–140 (EHFTGPAGAEGSDDESTESTDEAVAETADA) is disordered. Residues 121 to 140 (GSDDESTESTDEAVAETADA) show a composition bias toward acidic residues.

The protein belongs to the bacterial ribosomal protein bS6 family.

Functionally, binds together with bS18 to 16S ribosomal RNA. The polypeptide is Small ribosomal subunit protein bS6 (Rhodopirellula baltica (strain DSM 10527 / NCIMB 13988 / SH1)).